A 443-amino-acid polypeptide reads, in one-letter code: 3-isopropylmalate dehydratase large subunit (443 aa).

Cys347, Cys407, and Cys410 together coordinate [4Fe-4S] cluster.

It belongs to the aconitase/IPM isomerase family. LeuC type 1 subfamily. Heterodimer of LeuC and LeuD. Requires [4Fe-4S] cluster as cofactor.

It carries out the reaction (2R,3S)-3-isopropylmalate = (2S)-2-isopropylmalate. It participates in amino-acid biosynthesis; L-leucine biosynthesis; L-leucine from 3-methyl-2-oxobutanoate: step 2/4. Functionally, catalyzes the isomerization between 2-isopropylmalate and 3-isopropylmalate, via the formation of 2-isopropylmaleate. The sequence is that of 3-isopropylmalate dehydratase large subunit from Buchnera aphidicola subsp. Uroleucon aeneum.